A 748-amino-acid chain; its full sequence is Antigen peptide transporter 1 (748 aa).

The Cytoplasmic portion of the chain corresponds to 1 to 15 (MASSRCPAPRGCRCL). The helical transmembrane segment at 16 to 36 (PGASLAWLGTVLLFLADWVLL) threads the bilayer. The Lumenal segment spans residues 37–53 (RTALPRIFSLLVPTALP). A helical transmembrane segment spans residues 54-76 (LLRVWAVGLSRWAVLWLGACGVL). The Cytoplasmic segment spans residues 77-92 (RATVGSKSENAGAQGW). A helical transmembrane segment spans residues 93 to 113 (LAALEPLAAALGLALPGLALF). Topologically, residues 114–133 (RELISWGAPGSADSTRLLHW) are lumenal. Residues 134–154 (GSHPSAFVVSYAAALPAAALW) traverse the membrane as a helical segment. Residues 155–186 (HKLGSLWVPGGQGGSGNPVRRLLGCLGSETRR) are Cytoplasmic-facing. Residues 187 to 207 (LSLFLVLVVLSSLGEMAIPFF) traverse the membrane as a helical segment. The ABC transmembrane type-1 domain maps to 187 to 470 (LSLFLVLVVL…LLSIYPRVQK (284 aa)). The Lumenal segment spans residues 208–227 (TGRLTDWILQDGSADTFTRN). The chain crosses the membrane as a helical span at residues 228–248 (LTLMSILTIASAVLEFVGDGI). The Cytoplasmic segment spans residues 249–298 (YNNTMGHVHSHLQGEVFGAVLRQETEFFQQNQTGNITSRVTEDTSTLSDS). Residues 299–319 (LSENLSLFLWYLVRGLCLLGI) form a helical membrane-spanning segment. The Lumenal segment spans residues 320–328 (MLWGSVSLT). Residues 329–349 (MVTLVTLPLLFLLPKKVGKWY) traverse the membrane as a helical segment. Residues 350 to 418 (QLLEVQVRES…AVNSWTTSIS (69 aa)) lie on the Cytoplasmic side of the membrane. Residues 375–420 (PTVRSFANEEGEAQKFREKLQEIKTLNQKEAVAYAVNSWTTSISGM) form a part of the peptide-binding site region. The chain crosses the membrane as a helical span at residues 419–439 (GMLLKVGILYIGGQLVTSGAV). Over 440-443 (SSGN) the chain is Lumenal. A helical membrane pass occupies residues 444-464 (LVTFVLYQMQFTQAVEVLLSI). The segment at 453–487 (QFTQAVEVLLSIYPRVQKAVGSSEKIFEYLDRTPR) is part of the peptide-binding site. Topologically, residues 465–748 (YPRVQKAVGS…MVQAPADAPE (284 aa)) are cytoplasmic. The ABC transporter domain occupies 503-742 (VQFQDVSFAY…KGCYWAMVQA (240 aa)). ATP contacts are provided by residues 538 to 546 (GPNGSGKST), 641 to 647 (SQLSGGQ), and Q701. S545 serves as a coordination point for Mg(2+).

The protein belongs to the ABC transporter superfamily. ABCB family. MHC peptide exporter (TC 3.A.1.209) subfamily. As to quaternary structure, heterodimer of TAP1 and TAP2 (TAP1-TAP2). A component of the peptide loading complex (PLC), interacts via TAPBP with MHCI heterodimer; this interaction mediates peptide-MHCI assembly. Interacts with PSMB5 and PSMB8. The cofactor is Mg(2+).

It is found in the endoplasmic reticulum membrane. It catalyses the reaction a peptide antigen(in) + ATP + H2O = a peptide antigen(out) + ADP + phosphate + H(+). ABC transporter associated with antigen processing. In complex with TAP2 mediates unidirectional translocation of peptide antigens from cytosol to endoplasmic reticulum (ER) for loading onto MHC class I (MHCI) molecules. Uses the chemical energy of ATP to export peptides against the concentration gradient. During the transport cycle alternates between 'inward-facing' state with peptide binding site facing the cytosol to 'outward-facing' state with peptide binding site facing the ER lumen. Peptide antigen binding to ATP-loaded TAP1-TAP2 induces a switch to hydrolysis-competent 'outward-facing' conformation ready for peptide loading onto nascent MHCI molecules. Subsequently ATP hydrolysis resets the transporter to the 'inward facing' state for a new cycle. As a component of the peptide loading complex (PLC), acts as a molecular scaffold essential for peptide-MHCI assembly and antigen presentation. The polypeptide is Antigen peptide transporter 1 (TAP1) (Gorilla gorilla gorilla (Western lowland gorilla)).